We begin with the raw amino-acid sequence, 209 residues long: Uracil phosphoribosyltransferase (209 aa).

5-phospho-alpha-D-ribose 1-diphosphate contacts are provided by residues Arg79, Arg104, and 131 to 139; that span reads DPMLATGGS. Uracil-binding positions include Ile194 and 199-201; that span reads GDA. Asp200 lines the 5-phospho-alpha-D-ribose 1-diphosphate pocket.

The protein belongs to the UPRTase family. The cofactor is Mg(2+).

It catalyses the reaction UMP + diphosphate = 5-phospho-alpha-D-ribose 1-diphosphate + uracil. It participates in pyrimidine metabolism; UMP biosynthesis via salvage pathway; UMP from uracil: step 1/1. Its activity is regulated as follows. Allosterically activated by GTP. Catalyzes the conversion of uracil and 5-phospho-alpha-D-ribose 1-diphosphate (PRPP) to UMP and diphosphate. In Desulfitobacterium hafniense (strain DSM 10664 / DCB-2), this protein is Uracil phosphoribosyltransferase.